The primary structure comprises 409 residues: Sperm equatorial segment protein 1 (409 aa).

The first 18 residues, 1–18 (MKPVVLVALLWLWPSSFL), serve as a signal peptide directing secretion. N-linked (GlcNAc...) asparagine glycosylation is present at asparagine 132. Residues 141–223 (EPYIEKEPEP…TTNTQGTPNT (83 aa)) form a disordered region. Residues 167 to 177 (PEPEPESESAP) show a composition bias toward acidic residues. Positions 198–208 (NKVRTGTSRMS) are enriched in polar residues. The segment covering 209-223 (TVITQTTNTQGTPNT) has biased composition (low complexity).

Belongs to the SPESP1 family. In terms of processing, glycosylated. In testis there are two predominant forms of 77- and 67-kDa and a form of 47-kDa, whereas in epididymal sperm from caput, corpus, and cauda there are two forms of 47- and 43-kDa. Testis forms contain complex carbohydrate residues. Epididymal sperm forms are N-glycosylated. Then undergoes significant glycosylation in the testis and that the majority of these glycoconjugates are removed by the time sperm reach the caput epididymis.

The protein resides in the cytoplasmic vesicle. It localises to the secretory vesicle. Its subcellular location is the acrosome. Its function is as follows. Involved in fertilization ability of sperm. In Rattus norvegicus (Rat), this protein is Sperm equatorial segment protein 1.